We begin with the raw amino-acid sequence, 765 residues long: Probable serine/threonine-protein kinase DDB_G0271402 (765 aa).

Positions 35–328 constitute a Protein kinase domain; sequence LEFGQEIGKG…KEITERLKSL (294 aa). Residues 41–49 and Lys62 each bind ATP; that span reads IGKGAYGKI. Asp192 (proton acceptor) is an active-site residue. Disordered regions lie at residues 371–393, 443–477, 491–527, 545–620, 654–684, 699–738, and 746–765; these read IVHN…NNSN, SMGD…KIIN, SSDL…NNNS, PIQI…QQYQ, PLNI…HHHL, IISS…PTNI, and ASNS…TVQS. Residues 446–458 show a composition bias toward acidic residues; it reads DESDLDSDDEDDS. Low complexity-rich tracts occupy residues 459–470, 499–527, 562–605, 662–678, and 699–720; these read YTSSASSSRCNS, NGNN…NNNS, PPTS…PKSN, NNNN…GNVN, and IISS…SLTS.

It belongs to the protein kinase superfamily. TKL Ser/Thr protein kinase family.

It carries out the reaction L-seryl-[protein] + ATP = O-phospho-L-seryl-[protein] + ADP + H(+). It catalyses the reaction L-threonyl-[protein] + ATP = O-phospho-L-threonyl-[protein] + ADP + H(+). This Dictyostelium discoideum (Social amoeba) protein is Probable serine/threonine-protein kinase DDB_G0271402.